We begin with the raw amino-acid sequence, 154 residues long: Aspartate carbamoyltransferase regulatory chain (154 aa).

Zn(2+)-binding residues include C109, C114, C138, and C141.

Belongs to the PyrI family. In terms of assembly, contains catalytic and regulatory chains. The cofactor is Zn(2+).

Its function is as follows. Involved in allosteric regulation of aspartate carbamoyltransferase. This Yersinia enterocolitica serotype O:8 / biotype 1B (strain NCTC 13174 / 8081) protein is Aspartate carbamoyltransferase regulatory chain.